The primary structure comprises 492 residues: Cytochrome P450 monooxygenase ATEG_03631 (492 aa).

Residues 10–30 (FATLNPMVVVAIPVFLFVISL) traverse the membrane as a helical segment. The N-linked (GlcNAc...) asparagine glycan is linked to Asn309. A heme-binding site is contributed by Cys457.

Belongs to the cytochrome P450 family. Heme is required as a cofactor.

The protein localises to the membrane. The protein operates within secondary metabolite biosynthesis. Cytochrome P450 monooxygenase; part of the cluster A that mediates the biosynthesis of azasperpyranones, members of the azaphilone family that exhibit anti-cancer activities. Azasperpyranones are synthesized by 2 clusters, A and B. Cluster A is responsible for the production of the polyhydric phenol moiety while the azaphilonoid scaffold is produced by the cluster B. The non-reducing polyketide synthase ATEG_03629 produces 5-methyl orsellinic acid, which is then reduced to 5-methyl orsellinic aldehyde by the NRPS-like protein ATEG_03630. 5-methyl orsellinic aldehyde is then first hydroxylated by the FAD-dependent monooxygenase ATEG_03635 and subsequently hydroxylated by the cytochrome P450 monooxygenase ATEG_03631 to produce the unstable polyhydric phenol precursor of azasperpyranones. On the other hand, the polyketide synthase ATEG_07659 is responsible for producing the 3,5-dimethyloctadienone moiety from acetyl-CoA, three malonyl-CoA, and two S-adenosyl methionines (SAM). The 3,5-dimethyloctadienone moiety is then loaded onto the SAT domain of ATEG_07661 and extended with four malonyl-CoA and one SAM, which leads to the formation of 2,4-dihydroxy-6-(5,7-dimethyl-2-oxo-trans-3-trans-5-nonadienyl)-3-methylbenzaldehyde (compound 8) after reductive release and aldol condensation. The FAD-dependent monooxygenase ATEG_07662 is the next enzyme in the biosynthesis sequence and hydroxylates the side chain at the benzylic position of compound 8. In Aspergillus nidulans, afoF, the ortholog of the FAD-dependent oxygenase ATEG_07660, is the key enzyme for the biosynthesis of asperfuranone by catalyzing the hydroxylation at C-8 of to prevent the formation of a six-membered ring hemiacetal intermediate and thus facilitating the formation of a five-membered ring to produce asperfuranone. In Aspergillus terreus, ATEG_07660 is probably not functional, which leads to the formation of the six-membered ring hemiacetal intermediate presperpyranone instead of asperfuranone. Finally, ATEG_03636 is involved in the condensation of the polyhydric phenol moiety produced by cluster A and the perasperpyranone precursor produced by cluster B, to yield azasperpyranone A. Further modifications of azasperpyranone A result in the production of derivatives, including azasperpyranone B to F. This chain is Cytochrome P450 monooxygenase ATEG_03631, found in Aspergillus terreus (strain NIH 2624 / FGSC A1156).